The chain runs to 418 residues: Gamma-glutamyl phosphate reductase (418 aa).

This sequence belongs to the gamma-glutamyl phosphate reductase family.

It is found in the cytoplasm. The enzyme catalyses L-glutamate 5-semialdehyde + phosphate + NADP(+) = L-glutamyl 5-phosphate + NADPH + H(+). It functions in the pathway amino-acid biosynthesis; L-proline biosynthesis; L-glutamate 5-semialdehyde from L-glutamate: step 2/2. Functionally, catalyzes the NADPH-dependent reduction of L-glutamate 5-phosphate into L-glutamate 5-semialdehyde and phosphate. The product spontaneously undergoes cyclization to form 1-pyrroline-5-carboxylate. The sequence is that of Gamma-glutamyl phosphate reductase from Geobacter sulfurreducens (strain ATCC 51573 / DSM 12127 / PCA).